The primary structure comprises 125 residues: U-scoloptoxin(05)-Er1a (125 aa).

A signal peptide spans 1–20 (MLSLGVSIFLLVFLIPENSG).

The protein belongs to the scoloptoxin-05 family. Contains 4 disulfide bonds. Expressed by the venom gland.

The protein resides in the secreted. The protein is U-scoloptoxin(05)-Er1a of Ethmostigmus rubripes (Giant centipede).